Consider the following 1028-residue polypeptide: Multidrug resistance protein MdtC (1028 aa).

12 consecutive transmembrane segments (helical) span residues 3 to 23, 333 to 353, 360 to 380, 387 to 407, 431 to 451, 463 to 483, 528 to 548, 853 to 873, 875 to 895, 897 to 917, 953 to 973, and 984 to 1004; these read FFALFIYRPVATILISIAITL, EVEQTLVISVALVILVVFLFL, LIPAVAVPVSLIGTFAAMYLC, LSLMALTIATGFVVDDAIVVL, VGFTVLSMSLSLVAVFLPLLL, FAVTLSVAIGISLLVSLTLTP, LVGVVLLGTIALNIWLYISIP, VILILAAIATVYIVLGILYES, VHPLTILSTLPSAGVGALLAL, LFNAPFSLIALIGIMLLIGIV, PIMMTTLAALFGALPLVISGG, and ITIVGGLVMSQLLTLYTTPVV.

The protein belongs to the resistance-nodulation-cell division (RND) (TC 2.A.6) family. MdtC subfamily. Part of a tripartite efflux system composed of MdtA, MdtB and MdtC. MdtC forms a heteromultimer with MdtB.

The protein resides in the cell inner membrane. This Citrobacter koseri (strain ATCC BAA-895 / CDC 4225-83 / SGSC4696) protein is Multidrug resistance protein MdtC.